A 219-amino-acid polypeptide reads, in one-letter code: Sugar transporter SWEET1 (219 aa).

A run of 7 helical transmembrane segments spans residues 3 to 23, 38 to 58, 63 to 83, 98 to 118, 125 to 145, 156 to 176, and 189 to 209; these read FLQL…TTGL, VQFL…YYGL, GTVI…IATY, LLMV…ISPG, LGLT…ADLL, LSFS…LYGL, and PGIF…AVIP. The region spanning 5 to 90 is the MtN3/slv 1 domain; the sequence is QLLSCACIIF…ATYCHYTKEK (86 aa). The MtN3/slv 2 domain occupies 124-204; sequence QLGLTCSVFT…LIRFFLFWWF (81 aa).

Belongs to the SWEET sugar transporter family.

It localises to the golgi apparatus membrane. Its subcellular location is the cell membrane. Its function is as follows. Mediates sugar transport across membranes. The chain is Sugar transporter SWEET1 (slc50a1) from Danio rerio (Zebrafish).